Here is a 385-residue protein sequence, read N- to C-terminus: T-box transcription factor TBX10 (385 aa).

A DNA-binding region (T-box) is located at residues 69 to 252 (LEMKPLWEEF…SNPFAKGFRE (184 aa)). Disordered regions lie at residues 283 to 310 (GSAE…NQLL) and 328 to 359 (QNLY…AGDQ). Over residues 293–307 (KASASSSRTPTQPHN) the composition is skewed to polar residues. Residues 331–347 (YPGSPSRAGPPRARLAP) are compositionally biased toward low complexity.

The protein localises to the nucleus. In terms of biological role, probable transcriptional regulator involved in developmental processes. The chain is T-box transcription factor TBX10 (Tbx10) from Mus musculus (Mouse).